Reading from the N-terminus, the 224-residue chain is Lipoprotein-releasing system ATP-binding protein LolD (224 aa).

An ABC transporter domain is found at 5–224 (LEILDVSKCY…SLSGGMLTEL (220 aa)). Residue 40-47 (GSSGSGKS) coordinates ATP.

This sequence belongs to the ABC transporter superfamily. Lipoprotein translocase (TC 3.A.1.125) family. In terms of assembly, the complex is composed of two ATP-binding proteins (LolD) and two transmembrane proteins (LolC and LolE).

It localises to the cell inner membrane. Part of the ABC transporter complex LolCDE involved in the translocation of mature outer membrane-directed lipoproteins, from the inner membrane to the periplasmic chaperone, LolA. Responsible for the formation of the LolA-lipoprotein complex in an ATP-dependent manner. In Anaplasma marginale (strain St. Maries), this protein is Lipoprotein-releasing system ATP-binding protein LolD.